The chain runs to 184 residues: Ribosome-recycling factor (184 aa).

The protein belongs to the RRF family.

It is found in the cytoplasm. Functionally, responsible for the release of ribosomes from messenger RNA at the termination of protein biosynthesis. May increase the efficiency of translation by recycling ribosomes from one round of translation to another. This is Ribosome-recycling factor from Staphylococcus carnosus (strain TM300).